The sequence spans 388 residues: Leucine aminopeptidase 1 (388 aa).

An N-terminal signal peptide occupies residues 1-19; it reads MKSLSLLALAAIAPPAAVA. Residues 20-88 constitute a propeptide that is removed on maturation; sequence AVVDRQVPFE…SAKSHERIQV (69 aa). N-linked (GlcNAc...) asparagine glycosylation is present at asparagine 180. Residues histidine 188, aspartate 207, glutamate 246, and aspartate 273 each contribute to the Zn(2+) site. A disulfide bridge connects residues cysteine 322 and cysteine 326. Histidine 355 contributes to the Zn(2+) binding site.

This sequence belongs to the peptidase M28 family. M28E subfamily. In terms of assembly, monomer. The cofactor is Zn(2+).

The protein localises to the secreted. Functionally, extracellular aminopeptidase that allows assimilation of proteinaceous substrates. This is Leucine aminopeptidase 1 (LAP1) from Coccidioides posadasii (strain C735) (Valley fever fungus).